A 265-amino-acid polypeptide reads, in one-letter code: Apolipoprotein A-I (265 aa).

Positions 1–18 are cleaved as a signal peptide; it reads MKAVVLAVAALFLAGGEA. Repeat copies occupy residues 68–89 and 90–111. The segment at 68 to 265 is 10 X approximate tandem repeats; sequence LKLTENLDTL…EEASKKLSSQ (198 aa). Methionine 110 carries the methionine sulfoxide modification. One copy of the 3; half-length repeat lies at 112–122; the sequence is KDLADMKQKVQ. 3 tandem repeats follow at residues 123-144, 145-166, and 167-188. One copy of the 7; truncated repeat lies at 189-208; it reads PYSEQMRERLAERLAALRDS. Methionine 194 is subject to Methionine sulfoxide. Residues 209–230 form repeat 8; that stretch reads PSLAEYQAKAHEHLKTLHEKAQ. Residues 231–241 form a 9; half-length repeat; that stretch reads PALSDLGQGVL. The stretch at 242–265 is repeat 10; the sequence is PVLESLKATLVGAIEEASKKLSSQ.

The protein belongs to the apolipoprotein A1/A4/E family. In terms of assembly, homodimer. Interacts with APOA1BP and CLU. Component of a sperm activating protein complex (SPAP), consisting of APOA1, an immunoglobulin heavy chain, an immunoglobulin light chain and albumin. Interacts with NDRG1. Interacts with SCGB3A2. Interacts with NAXE and YJEFN3. Post-translationally, glycosylated. Palmitoylated. In terms of processing, phosphorylation sites are present in the extracellular medium.

It localises to the secreted. Its function is as follows. Participates in the reverse transport of cholesterol from tissues to the liver for excretion by promoting cholesterol efflux from tissues and by acting as a cofactor for the lecithin cholesterol acyltransferase (LCAT). As part of the SPAP complex, activates spermatozoa motility. This is Apolipoprotein A-I (Apoa1) from Dipodomys ordii (Ord's kangaroo rat).